Consider the following 199-residue polypeptide: Probable GTP-binding protein EngB (199 aa).

The EngB-type G domain occupies Asp-28–Val-199. Residues Gly-36–Ser-43, Gly-63–Leu-67, Asp-81–Gly-84, Thr-148–Asp-151, and Phe-180–Ser-182 contribute to the GTP site. Ser-43 and Thr-65 together coordinate Mg(2+).

This sequence belongs to the TRAFAC class TrmE-Era-EngA-EngB-Septin-like GTPase superfamily. EngB GTPase family. Requires Mg(2+) as cofactor.

Its function is as follows. Necessary for normal cell division and for the maintenance of normal septation. The sequence is that of Probable GTP-binding protein EngB from Streptococcus pyogenes serotype M28 (strain MGAS6180).